The chain runs to 381 residues: Homoserine O-succinyltransferase (381 aa).

Positions 45–360 (NAVLVCHALN…PHGHDAFLLD (316 aa)) constitute an AB hydrolase-1 domain. The active-site Nucleophile is S151. A substrate-binding site is contributed by R221. Catalysis depends on residues D321 and H354. D355 is a binding site for substrate.

This sequence belongs to the AB hydrolase superfamily. MetX family. Homodimer.

Its subcellular location is the cytoplasm. The catalysed reaction is L-homoserine + succinyl-CoA = O-succinyl-L-homoserine + CoA. It participates in amino-acid biosynthesis; L-methionine biosynthesis via de novo pathway; O-succinyl-L-homoserine from L-homoserine: step 1/1. In terms of biological role, transfers a succinyl group from succinyl-CoA to L-homoserine, forming succinyl-L-homoserine. This is Homoserine O-succinyltransferase from Burkholderia lata (strain ATCC 17760 / DSM 23089 / LMG 22485 / NCIMB 9086 / R18194 / 383).